Reading from the N-terminus, the 346-residue chain is Large ribosomal subunit protein uL3 (346 aa).

The disordered stretch occupies residues 324 to 346 (KPPKKKPPVERPQITYVSRESKQ).

It belongs to the universal ribosomal protein uL3 family. In terms of assembly, part of the 50S ribosomal subunit. Forms a cluster with proteins L14 and L24e.

Functionally, one of the primary rRNA binding proteins, it binds directly near the 3'-end of the 23S rRNA, where it nucleates assembly of the 50S subunit. This is Large ribosomal subunit protein uL3 from Thermococcus gammatolerans (strain DSM 15229 / JCM 11827 / EJ3).